The chain runs to 565 residues: Mitochondrial distribution and morphology protein 34 (565 aa).

One can recognise an SMP-LTD domain in the interval 1–195 (MAFNFNWSPL…LPAIIHRLSL (195 aa)). Disordered regions lie at residues 207-236 (EDQD…VDAL), 296-317 (PSDQ…LSRT), and 348-504 (STYG…RQLP). A compositionally biased stretch (basic residues) spans 358–370 (RHSKAHARKRKKR). A compositionally biased stretch (basic and acidic residues) spans 371 to 381 (VVDLRRPKQPE). Residues 382–401 (SETASVTDESSFTETTSAPS) show a composition bias toward polar residues. 2 stretches are compositionally biased toward basic and acidic residues: residues 446–472 (LRRD…HAEV) and 483–496 (IRHE…EKQE).

This sequence belongs to the MDM34 family. As to quaternary structure, component of the ER-mitochondria encounter structure (ERMES) or MDM complex, composed of mmm1, mdm10, mdm12 and mdm34.

Its subcellular location is the mitochondrion outer membrane. Its function is as follows. Component of the ERMES/MDM complex, which serves as a molecular tether to connect the endoplasmic reticulum (ER) and mitochondria. Components of this complex are involved in the control of mitochondrial shape and protein biogenesis, and function in nonvesicular lipid trafficking between the ER and mitochondria. Mdm34 is required for the interaction of the ER-resident membrane protein mmm1 and the outer mitochondrial membrane-resident beta-barrel protein mdm10. The sequence is that of Mitochondrial distribution and morphology protein 34 from Aspergillus terreus (strain NIH 2624 / FGSC A1156).